We begin with the raw amino-acid sequence, 237 residues long: Keratin-associated protein 5-5 (237 aa).

Tandem repeats lie at residues 62-65 (CCVP), 68-71 (CCKP), 74-77 (CCVP), 159-162 (CCKP), 178-181 (CCKP), 188-191 (CCKP), 198-201 (CCKP), and 227-230 (CCVP). An 8 X 4 AA repeats of C-C-X-P region spans residues 62–230 (CCVPVCCCKP…CCCQSSCCVP (169 aa)).

This sequence belongs to the KRTAP type 5 family. Interacts with hair keratins. In terms of tissue distribution, restricted to hair root, not detected in any other tissues.

Functionally, in the hair cortex, hair keratin intermediate filaments are embedded in an interfilamentous matrix, consisting of hair keratin-associated protein (KRTAP), which are essential for the formation of a rigid and resistant hair shaft through their extensive disulfide bond cross-linking with abundant cysteine residues of hair keratins. The matrix proteins include the high-sulfur and high-glycine-tyrosine keratins. In Homo sapiens (Human), this protein is Keratin-associated protein 5-5 (KRTAP5-5).